Consider the following 67-residue polypeptide: Small ribosomal subunit protein bS21 (67 aa).

This sequence belongs to the bacterial ribosomal protein bS21 family.

This chain is Small ribosomal subunit protein bS21, found in Granulibacter bethesdensis (strain ATCC BAA-1260 / CGDNIH1).